The following is a 201-amino-acid chain: Dermatopontin (201 aa).

The first 18 residues, 1–18, serve as a signal peptide directing secretion; sequence MDLTLLWVLLPLVTTAWG. The residue at position 19 (Q19) is a Pyrrolidone carboxylic acid. The segment at 19–186 is 2 X 53-55 AA tandem repeats; it reads QYGGYGYPYQ…AVERDRQWKF (168 aa). Position 23 is a sulfotyrosine (Y23). 4 consecutive repeat copies span residues 26–79, 70–75, 80–135, and 125–130. Intrachain disulfides connect C50–C77, C90–C132, C106–C133, C139–C196, and C143–C189. The tract at residues 70–186 is 3 X 6 AA tandem repeats of D-R-[EQ]-W-[NQK]-[FY]; sequence DRQWNYACMP…AVERDRQWKF (117 aa). Sulfotyrosine occurs at positions 162, 164, and 167. The 2-3 repeat unit spans residues 181–186; the sequence is DRQWKF. Y194 bears the Sulfotyrosine mark.

Belongs to the dermatopontin family. Interacts with TGFB1, DCN and collagen. Sulfated on tyrosine residue(s).

It is found in the secreted. Its subcellular location is the extracellular space. The protein localises to the extracellular matrix. Seems to mediate adhesion by cell surface integrin binding. May serve as a communication link between the dermal fibroblast cell surface and its extracellular matrix environment. Enhances TGFB1 activity. Inhibits cell proliferation. Accelerates collagen fibril formation, and stabilizes collagen fibrils against low-temperature dissociation. This is Dermatopontin (Dpt) from Mus musculus (Mouse).